The primary structure comprises 304 residues: MYVLSVEKPTLRNKFAAGIGVVLVCVVASFIPTPVFALDTTKLIQAVQSEESALHARVGMTVFDSNTGTTWNYRGDERFPLNSTHKTFSCAALLAKVDGKSLSLGQSVSISKEMLVTYSPITEKSLSPETVTFGKICQAAVSYSDNTAANVVFDAIGGATGFNAYMRSIGDEETQLDRKEPELNEGTPGDVRDTTTPNAMVNSLRKILLGDALSASSRSQLTQWMLDDQVAGALLRASLPSDWKIADKTGAGGYGSRSIVAVIWPPSKQPLVVGIYITQTKASMQASNQAIARIGVVLKDTVAP.

The first 37 residues, 1 to 37 (MYVLSVEKPTLRNKFAAGIGVVLVCVVASFIPTPVFA), serve as a signal peptide directing secretion. Ser-83 serves as the catalytic Acyl-ester intermediate. Cysteines 90 and 137 form a disulfide. The segment at 173–195 (ETQLDRKEPELNEGTPGDVRDTT) is disordered. A substrate-binding site is contributed by 248-250 (KTG).

It belongs to the class-A beta-lactamase family.

It catalyses the reaction a beta-lactam + H2O = a substituted beta-amino acid. Its function is as follows. Hydrolyzes carbenicillin. Methicillin and oxacillin are weakly hydrolyzed. This chain is Beta-lactamase AER-1 (aer1), found in Aeromonas hydrophila.